A 32-amino-acid polypeptide reads, in one-letter code: Protamine-1 (32 aa).

Residues 1 to 32 (PRRRRASSGRPVRRRRRPKMSRRRRRGGRRRR) are disordered.

In terms of tissue distribution, testis.

The protein localises to the nucleus. The protein resides in the chromosome. Its function is as follows. Protamines substitute for histones in the chromatin of sperm during the haploid phase of spermatogenesis. They compact sperm DNA into a highly condensed, stable and inactive complex. The polypeptide is Protamine-1 (Esox lucius (Northern pike)).